A 237-amino-acid chain; its full sequence is Ribosomal RNA small subunit methyltransferase G (237 aa).

S-adenosyl-L-methionine contacts are provided by residues Gly-78, Phe-83, 129-130 (AE), and Arg-148.

Belongs to the methyltransferase superfamily. RNA methyltransferase RsmG family.

It localises to the cytoplasm. Specifically methylates the N7 position of a guanine in 16S rRNA. This chain is Ribosomal RNA small subunit methyltransferase G, found in Streptococcus pyogenes serotype M12 (strain MGAS2096).